The following is a 336-amino-acid chain: Fructose-1,6-bisphosphatase class 1 (336 aa).

Residues Glu-90, Asp-112, Leu-114, and Asp-115 each coordinate Mg(2+). Substrate is bound by residues 115–118 (DGSS), Asn-207, and Lys-273. Residue Glu-279 participates in Mg(2+) binding.

Belongs to the FBPase class 1 family. In terms of assembly, homotetramer. Requires Mg(2+) as cofactor.

The protein resides in the cytoplasm. The catalysed reaction is beta-D-fructose 1,6-bisphosphate + H2O = beta-D-fructose 6-phosphate + phosphate. It functions in the pathway carbohydrate biosynthesis; gluconeogenesis. This chain is Fructose-1,6-bisphosphatase class 1, found in Xanthomonas oryzae pv. oryzae (strain PXO99A).